A 464-amino-acid chain; its full sequence is Glutamate--tRNA ligase (464 aa).

A 'HIGH' region motif is present at residues 9-19 (PSPTGYLHIGG). The 'KMSKS' region motif lies at 242-246 (KISKR). Residue K245 coordinates ATP.

The protein belongs to the class-I aminoacyl-tRNA synthetase family. Glutamate--tRNA ligase type 1 subfamily. As to quaternary structure, monomer.

Its subcellular location is the cytoplasm. The catalysed reaction is tRNA(Glu) + L-glutamate + ATP = L-glutamyl-tRNA(Glu) + AMP + diphosphate. Catalyzes the attachment of glutamate to tRNA(Glu) in a two-step reaction: glutamate is first activated by ATP to form Glu-AMP and then transferred to the acceptor end of tRNA(Glu). The protein is Glutamate--tRNA ligase of Neisseria meningitidis serogroup A / serotype 4A (strain DSM 15465 / Z2491).